We begin with the raw amino-acid sequence, 562 residues long: MRTAMSCGGGLAQRLDFSSSDEEDGMSPGLEEGSHSNQRGSPVNSWRANNCPFPITPQRNERGLSPSQEELSPCSDYSPVPSDKGVGGECPGTPLHYSTWKKLKLCDTPYTPKSLLYKTLPSPGSRVQCRGQRLLRFVAGTGAELDDPALVNVNPFTPESYRQANFHPNGKRKERPEDDCSAEPQMKYAEKEHPAVFQSKRFVLRETNMVSRYKTEFLEIEKIGAGEFGSVFKCVKRLDGCFYAIKRSKKPLAGSTDEQLALREVYAHAVLGHHPHVVRYYSAWAEDDHMIIQNEYCNGGSLQDLIMENKKEGRFVPEQELKEILLQVSMGLKYIHSSGLVHMDIKPSNIFICRKQTEVGQDESDGEDDLSSASVLYKIGDLGHVTSILNPQVEEGDSRFLANEILQEDYRQLPKADIFALGLTITLAAGAGPLPCNEDSWHHIRKGNLPHIPQPLTPAFLALLKLLVHPDPVMRPPAVSLAKNSLLRRCVGKAAQLQKQLNVEKFKTAMLERELKAAKLAHGSGKDECSDLPPMSDFSCRGRKRLVGAKNARSLSFTCGGY.

Disordered stretches follow at residues 1 to 86 and 161 to 181; these read MRTA…DKGV and YRQA…DDCS. Positions 35 to 48 are enriched in polar residues; that stretch reads HSNQRGSPVNSWRA. In terms of domain architecture, Protein kinase spans 217 to 491; it reads FLEIEKIGAG…AKNSLLRRCV (275 aa). ATP-binding positions include 223-231 and Lys246; that span reads IGAGEFGSV. Residue Asp344 is the Proton acceptor of the active site. Mg(2+) contacts are provided by Asn349 and Asp381. Residues 494–520 adopt a coiled-coil conformation; that stretch reads AAQLQKQLNVEKFKTAMLERELKAAKL.

It belongs to the protein kinase superfamily. Ser/Thr protein kinase family. WEE1 subfamily.

The protein localises to the nucleus. It carries out the reaction L-tyrosyl-[protein] + ATP = O-phospho-L-tyrosyl-[protein] + ADP + H(+). In terms of biological role, oocyte-specific protein tyrosine kinase that phosphorylates and inhibits cdk1 and acts as a regulator of meiosis. Required to maintain meiotic arrest in oocytes by phosphorylating cdk1 at 'Tyr-15', leading to inhibit cdk1 activity and prevent meiotic reentry. The protein is Wee1-like protein kinase 2 (wee2) of Xenopus tropicalis (Western clawed frog).